Here is a 599-residue protein sequence, read N- to C-terminus: Membrane protein insertase YidC (599 aa).

The helical transmembrane segment at 6-26 (NYFIAIALSVVIVLAWQFLYM) threads the bilayer. The segment at 35–78 (RAEEARQAQQQTTQQQPAPGAAPGATVEGAPPASSTQAAATATR) is disordered. Over residues 41 to 76 (QAQQQTTQQQPAPGAAPGATVEGAPPASSTQAAATA) the composition is skewed to low complexity. 4 consecutive transmembrane segments (helical) span residues 378–398 (FGVA…PLAS), 448–468 (WPML…YVTI), 501–521 (VPHF…MFLQ), and 536–556 (IFTW…AGLV).

The protein belongs to the OXA1/ALB3/YidC family. Type 1 subfamily. Interacts with the Sec translocase complex via SecD. Specifically interacts with transmembrane segments of nascent integral membrane proteins during membrane integration.

The protein resides in the cell inner membrane. Its function is as follows. Required for the insertion and/or proper folding and/or complex formation of integral membrane proteins into the membrane. Involved in integration of membrane proteins that insert both dependently and independently of the Sec translocase complex, as well as at least some lipoproteins. Aids folding of multispanning membrane proteins. The chain is Membrane protein insertase YidC from Agrobacterium fabrum (strain C58 / ATCC 33970) (Agrobacterium tumefaciens (strain C58)).